Here is a 1022-residue protein sequence, read N- to C-terminus: GPI ethanolamine phosphate transferase 1 (1022 aa).

At 1-6 (MARVGR) the chain is on the cytoplasmic side. Residues 7–27 (VGFLTLAVVFHLMYAYSIFDI) traverse the membrane as a helical segment. Residues 28-466 (YFVSPIVSGM…LQTYDWLFLR (439 aa)) are Lumenal-facing. N-linked (GlcNAc...) asparagine glycosylation is found at Asn148 and Asn433. The helical transmembrane segment at 467 to 487 (TIVSLGYLGWIAYALTTVIDL) threads the bilayer. Over 488–498 (HVLHGKSESNR) the chain is Cytoplasmic. The chain crosses the membrane as a helical span at residues 499–519 (TTFSIMFFSSILVALFSVLLY). Topologically, residues 520–560 (QGSSWRYYLYALFPIFFWEEVFARRKALLAGREILLGHVHS) are lumenal. A helical membrane pass occupies residues 561–581 (VSGYFAFAIQLLLYVGVLEAL). The Cytoplasmic segment spans residues 582-589 (VQSYFHRD). The helical transmembrane segment at 590-610 (IFTVCFILGGFWPITYGTKFL) threads the bilayer. The Lumenal portion of the chain corresponds to 611 to 614 (GQHK). The chain crosses the membrane as a helical span at residues 615–635 (LLSASWALGCFLMSIFTLLPA). Over 636–640 (NKVED) the chain is Cytoplasmic. Residues 641 to 661 (MMMISCGSLLMFLTGLLYLIF) form a helical membrane-spanning segment. Topologically, residues 662-685 (ERSILGQKRSSDPNSVVSSCGSRT) are lumenal. A helical transmembrane segment spans residues 686 to 706 (IMGAQVGMILLALIVTRSSVA). Topologically, residues 707 to 713 (SLQAKQG) are cytoplasmic. Residues 714-734 (LPLGNQVLGWAILVSSLLLPF) form a helical membrane-spanning segment. The Lumenal portion of the chain corresponds to 735–749 (LHRLYPNSHYLHRLM). 2 consecutive transmembrane segments (helical) span residues 750 to 770 (VIFL…EGLF) and 771 to 791 (YFVF…IYIH). The Lumenal portion of the chain corresponds to 792–837 (TTAPTREQDHSVANGSLPAKKPSPGNTVVVEGQPYRYRTLSVSDAR). N-linked (GlcNAc...) asparagine glycosylation occurs at Asn805. Residues 838 to 858 (VALFFFFLLQSGFFSTGNIAS) form a helical membrane-spanning segment. Residues 859–880 (VSSFSLDSVYRLIPIFNPFAQG) lie on the Cytoplasmic side of the membrane. The helical transmembrane segment at 881-901 (ALLILKLLIPFAIISANLGIL) threads the bilayer. Topologically, residues 902–910 (NHRLEVAPS) are lumenal. The chain crosses the membrane as a helical span at residues 911–931 (ALFMVVMSISDVMTLNFFYMV). At 932–947 (RDEGSWLEIGTTISHF) the chain is on the cytoplasmic side. The helical transmembrane segment at 948–968 (CIASFLCTFVAVLEFLSELFI) threads the bilayer. Residues 969 to 1022 (SGVDFGHPATTVGSAVAKAVNGSVACGHSPDSDISGEDSTSVGITAKADPDARS) are Lumenal-facing. Residue Asn989 is glycosylated (N-linked (GlcNAc...) asparagine). Positions 998–1022 (PDSDISGEDSTSVGITAKADPDARS) are disordered.

Belongs to the PIGG/PIGN/PIGO family. PIGN subfamily.

It localises to the endoplasmic reticulum membrane. It functions in the pathway glycolipid biosynthesis; glycosylphosphatidylinositol-anchor biosynthesis. In terms of biological role, ethanolamine phosphate transferase involved in glycosylphosphatidylinositol-anchor biosynthesis. Transfers ethanolamine phosphate to the first alpha-1,4-linked mannose of the glycosylphosphatidylinositol precursor of GPI-anchor. The sequence is that of GPI ethanolamine phosphate transferase 1 (mcd4) from Aspergillus oryzae (strain ATCC 42149 / RIB 40) (Yellow koji mold).